Here is a 186-residue protein sequence, read N- to C-terminus: Putative inactive recombination-promoting nuclease-like protein YjiQ (186 aa).

It belongs to the Rpn/YhgA-like nuclease family.

Functionally, this pseudogene is the C-terminal fragment of low activity DNA endonuclease RpnD which probably yields 3'-hydroxyl ends. The intact protein can be seen in this entry (AC B7NGZ6). Expression of the repaired protein increases the frequency of recA-independent recombination, but also decreases viability probably via DNA damage; in a RecA strain expression has no effect on viability but does induce the SOS repair response. May play a role in horizontal gene transfer. The chain is Putative inactive recombination-promoting nuclease-like protein YjiQ (yjiQ) from Escherichia coli (strain K12).